An 83-amino-acid polypeptide reads, in one-letter code: Kunitz-type serine protease inhibitor tigerin-3 (83 aa).

The N-terminal stretch at 1 to 24 is a signal peptide; sequence MSSGGLLLLLGLLTLWEILTPVSS. The region spanning 31–81 is the BPTI/Kunitz inhibitor domain; it reads CHLPHDTGPCNRNTQAFYYNPVYHTCLKFIYGGCQGNSNNFKTIDECKRTC. 3 disulfide bridges follow: C31–C81, C40–C64, and C56–C77.

Belongs to the venom Kunitz-type family. Expressed by the venom gland.

It is found in the secreted. Functionally, serine protease inhibitor. In Notechis scutatus scutatus (Mainland tiger snake), this protein is Kunitz-type serine protease inhibitor tigerin-3.